The sequence spans 334 residues: MRFVDEVVIKLQAGKGGNGCVSFRREKYVPRGGPDGGDGGNGGSIYLKADENVNTLIDYRYKREYYAENGRPGEGRNCYGKAGEDLYLVVPVGTSVFDIDTNKKIGEVLQHGQTFKLVSGGKRGIGNTHFKSSTNQAPRKFTLGEEGEYKEVRLELNLLADVALLGLPNAGKSTLIRSVSEATPKVADYPFTTMYPHLGVVKVGVDSFVMADIPGVIEGAAEGAGLGLRFLKHLTRARCVLHVVDICPFNESDPVENYFAVEKELEKYSQELFDKPRFLVINKIDLLADKVEQKCQEFVEQIGYQGNYYTISAAMKKGTDELAKKLNEFLQKQE.

The region spanning 1 to 159 is the Obg domain; the sequence is MRFVDEVVIK…KEVRLELNLL (159 aa). The 172-residue stretch at 160–331 folds into the OBG-type G domain; the sequence is ADVALLGLPN…LAKKLNEFLQ (172 aa). GTP-binding positions include 166–173, 191–195, 212–215, 282–285, and 312–314; these read GLPNAGKS, FTTMY, DIPG, NKID, and SAA. Positions 173 and 193 each coordinate Mg(2+).

The protein belongs to the TRAFAC class OBG-HflX-like GTPase superfamily. OBG GTPase family. As to quaternary structure, monomer. It depends on Mg(2+) as a cofactor.

The protein resides in the cytoplasm. Its function is as follows. An essential GTPase which binds GTP, GDP and possibly (p)ppGpp with moderate affinity, with high nucleotide exchange rates and a fairly low GTP hydrolysis rate. Plays a role in control of the cell cycle, stress response, ribosome biogenesis and in those bacteria that undergo differentiation, in morphogenesis control. In Francisella tularensis subsp. tularensis (strain FSC 198), this protein is GTPase Obg.